The primary structure comprises 234 residues: Phosphoribosylaminoimidazole-succinocarboxamide synthase (234 aa).

The protein belongs to the SAICAR synthetase family.

The catalysed reaction is 5-amino-1-(5-phospho-D-ribosyl)imidazole-4-carboxylate + L-aspartate + ATP = (2S)-2-[5-amino-1-(5-phospho-beta-D-ribosyl)imidazole-4-carboxamido]succinate + ADP + phosphate + 2 H(+). It functions in the pathway purine metabolism; IMP biosynthesis via de novo pathway; 5-amino-1-(5-phospho-D-ribosyl)imidazole-4-carboxamide from 5-amino-1-(5-phospho-D-ribosyl)imidazole-4-carboxylate: step 1/2. The sequence is that of Phosphoribosylaminoimidazole-succinocarboxamide synthase from Staphylococcus aureus (strain MRSA252).